Consider the following 285-residue polypeptide: Retron Ec67 DNA adenine methylase (285 aa).

Residues tryptophan 7, lysine 11, aspartate 51, and aspartate 179 each contribute to the S-adenosyl-L-methionine site.

It belongs to the N(4)/N(6)-methyltransferase family.

The enzyme catalyses a 2'-deoxyadenosine in DNA + S-adenosyl-L-methionine = an N(6)-methyl-2'-deoxyadenosine in DNA + S-adenosyl-L-homocysteine + H(+). In terms of biological role, an alpha subtype methylase that recognizes the double-stranded sequence 5'-GATC-3' and methylates A-2 on both strands. May play a regulatory role in the functions of the retron. The chain is Retron Ec67 DNA adenine methylase from Escherichia coli.